A 506-amino-acid polypeptide reads, in one-letter code: Histidine ammonia-lyase (506 aa).

Positions Ala142–Gly144 form a cross-link, 5-imidazolinone (Ala-Gly). The residue at position 143 (Ser143) is a 2,3-didehydroalanine (Ser).

This sequence belongs to the PAL/histidase family. In terms of processing, contains an active site 4-methylidene-imidazol-5-one (MIO), which is formed autocatalytically by cyclization and dehydration of residues Ala-Ser-Gly.

Its subcellular location is the cytoplasm. The catalysed reaction is L-histidine = trans-urocanate + NH4(+). Its pathway is amino-acid degradation; L-histidine degradation into L-glutamate; N-formimidoyl-L-glutamate from L-histidine: step 1/3. The sequence is that of Histidine ammonia-lyase from Bacillus cereus (strain B4264).